The primary structure comprises 500 residues: Glycerol kinase (500 aa).

Residue T13 participates in ADP binding. Residues T13, T14, and S15 each contribute to the ATP site. T13 provides a ligand contact to sn-glycerol 3-phosphate. R17 contacts ADP. Sn-glycerol 3-phosphate-binding residues include R83, E84, Y135, and D244. Glycerol is bound by residues R83, E84, Y135, D244, and Q245. 4 residues coordinate ADP: T266, G309, G410, and N414. ATP is bound by residues T266, G309, and G410.

Belongs to the FGGY kinase family.

It catalyses the reaction glycerol + ATP = sn-glycerol 3-phosphate + ADP + H(+). It participates in polyol metabolism; glycerol degradation via glycerol kinase pathway; sn-glycerol 3-phosphate from glycerol: step 1/1. Inhibited by fructose 1,6-bisphosphate (FBP). Functionally, key enzyme in the regulation of glycerol uptake and metabolism. Catalyzes the phosphorylation of glycerol to yield sn-glycerol 3-phosphate. This chain is Glycerol kinase, found in Chromobacterium violaceum (strain ATCC 12472 / DSM 30191 / JCM 1249 / CCUG 213 / NBRC 12614 / NCIMB 9131 / NCTC 9757 / MK).